The following is a 598-amino-acid chain: Elongation factor 4 (598 aa).

In terms of domain architecture, tr-type G spans 3–185 (QHIRNFSIIA…MIVARIPPPE (183 aa)). GTP contacts are provided by residues 15–20 (DHGKST) and 132–135 (NKID).

The protein belongs to the TRAFAC class translation factor GTPase superfamily. Classic translation factor GTPase family. LepA subfamily.

It localises to the cell inner membrane. The enzyme catalyses GTP + H2O = GDP + phosphate + H(+). Functionally, required for accurate and efficient protein synthesis under certain stress conditions. May act as a fidelity factor of the translation reaction, by catalyzing a one-codon backward translocation of tRNAs on improperly translocated ribosomes. Back-translocation proceeds from a post-translocation (POST) complex to a pre-translocation (PRE) complex, thus giving elongation factor G a second chance to translocate the tRNAs correctly. Binds to ribosomes in a GTP-dependent manner. In Nitrosomonas eutropha (strain DSM 101675 / C91 / Nm57), this protein is Elongation factor 4.